Reading from the N-terminus, the 376-residue chain is 1-acyl-sn-glycerol-3-phosphate acyltransferase gamma (376 aa).

At 1-124 (MGLLAFLKTQ…LGSSKVLAKK (124 aa)) the chain is on the cytoplasmic side. The HXXXXD motif signature appears at 96 to 101 (HNFEID). A helical membrane pass occupies residues 125–145 (ELLYVPLIGWTWYFLEIVFCK). Over 146–316 (RKWEEDRDTV…TLLNFLSWAT (171 aa)) the chain is Lumenal. A helical transmembrane segment spans residues 317–339 (ILLSPLFSFVLGVFASGSPLLIL). Over 340 to 376 (TFLGFVGAASFGVRRLIGVTEIEKGSSYGNQEFKKKE) the chain is Cytoplasmic.

This sequence belongs to the 1-acyl-sn-glycerol-3-phosphate acyltransferase family. Widely expressed with highest levels in testis, pancreas and kidney, followed by spleen, lung, adipose tissue and liver.

It localises to the endoplasmic reticulum membrane. The protein resides in the nucleus envelope. The enzyme catalyses a 1-acyl-sn-glycero-3-phosphate + an acyl-CoA = a 1,2-diacyl-sn-glycero-3-phosphate + CoA. It catalyses the reaction pentadecanoyl-CoA + 1-(9Z-octadecenoyl)-sn-glycero-3-phosphate = 1-(9Z)-octadecenoyl-2-pentadecanoyl-sn-glycero-3-phosphate + CoA. It carries out the reaction heptadecanoyl-CoA + 1-(9Z-octadecenoyl)-sn-glycero-3-phosphate = 1-(9Z)-octadecenoyl-2-heptadecanoyl-sn-glycero-3-phosphate + CoA. The catalysed reaction is 1-(9Z-octadecenoyl)-sn-glycero-3-phosphate + octadecanoyl-CoA = 1-(9Z-octadecenoyl)-2-octadecanoyl-sn-glycero-3-phosphate + CoA. The enzyme catalyses nonadecanoyl-CoA + 1-(9Z-octadecenoyl)-sn-glycero-3-phosphate = 1-(9Z)-octadecenoyl-2-nonadecanoyl-sn-glycero-3-phosphate + CoA. It catalyses the reaction 1-(9Z-octadecenoyl)-sn-glycero-3-phosphate + (5Z,8Z,11Z,14Z)-eicosatetraenoyl-CoA = 1-(9Z)-octadecenoyl-2-(5Z,8Z,11Z,14Z)-eicosatetraenoyl-sn-glycero-3-phosphate + CoA. It carries out the reaction 1-(9Z-octadecenoyl)-sn-glycero-3-phosphate + (9Z)-octadecenoyl-CoA = 1,2-di-(9Z-octadecenoyl)-sn-glycero-3-phosphate + CoA. The catalysed reaction is 1-(9Z-octadecenoyl)-sn-glycero-3-phosphate + (9Z,12Z)-octadecadienoyl-CoA = 1-(9Z)-octadecenoyl-2-(9Z,12Z)-octadecadienoyl-sn-glycero-3-phosphate + CoA. The enzyme catalyses 1-(9Z-octadecenoyl)-sn-glycero-3-phosphocholine + (5Z,8Z,11Z,14Z)-eicosatetraenoyl-CoA = 1-(9Z)-octadecenoyl-2-(5Z,8Z,11Z,14Z)-icosatetraenoyl-sn-glycero-3-phosphocholine + CoA. It catalyses the reaction 1-(9Z-octadecenoyl)-sn-glycero-3-phospho-(1D-myo-inositol) + (5Z,8Z,11Z,14Z)-eicosatetraenoyl-CoA = 1-(9Z-octadecenoyl)-2-(5Z,8Z,11Z,14Z-eicosatetraenoyl)-sn-glycero-3-phospho-1D-myo-inositol + CoA. It carries out the reaction 1-(9Z-octadecenoyl)-sn-glycero-3-phospho-L-serine + (5Z,8Z,11Z,14Z)-eicosatetraenoyl-CoA = 1-(9Z-octadecenoyl)-2-(5Z,8Z,11Z,14Z-eicosatetraenoyl)-sn-glycero-3-phospho-L-serine + CoA. The catalysed reaction is 1-hexadecanoyl-sn-glycero-3-phosphate + (9Z)-octadecenoyl-CoA = 1-hexadecanoyl-2-(9Z-octadecenoyl)-sn-glycero-3-phosphate + CoA. The enzyme catalyses 1-hexadecanoyl-sn-glycero-3-phosphate + (5Z,8Z,11Z,14Z)-eicosatetraenoyl-CoA = 1-hexadecanoyl-2-(5Z,8Z,11Z,14Z-eicosatetraenoyl)-sn-glycero-3-phosphate + CoA. It catalyses the reaction 1-heptadecanoyl-sn-glycero-3-phosphate + (5Z,8Z,11Z,14Z)-eicosatetraenoyl-CoA = 1-heptadecanoyl-2-(5Z,8Z,11Z,14Z)-eicosatetraenoyl-sn-glycero-3-phosphate + CoA. It carries out the reaction 1-octadecanoyl-sn-glycero-3-phosphate + (9Z)-octadecenoyl-CoA = 1-octadecanoyl-2-(9Z-octadecenoyl)-sn-glycero-3-phosphate + CoA. The catalysed reaction is 1-octadecanoyl-sn-glycero-3-phosphate + (5Z,8Z,11Z,14Z)-eicosatetraenoyl-CoA = 1-octadecanoyl-2-(5Z,8Z,11Z,14Z-eicosatetraenoyl)-sn-glycero-3-phosphate + CoA. The enzyme catalyses 1-(9Z-octadecenoyl)-sn-glycero-3-phosphate + hexadecanoyl-CoA = 1-hexadecanoyl-2-(9Z-octadecenoyl)-sn-glycero-3-phosphate + CoA. It catalyses the reaction 1-O-(9Z-octadecenyl)-sn-glycero-3-phosphate + (5Z,8Z,11Z,14Z)-eicosatetraenoyl-CoA = 1-O-(9Z-octadecenyl)-2-(5Z,8Z,11Z,14Z-eicosatetraenoyl)-sn-glycero-3-phosphate + CoA. It carries out the reaction a 1-acyl-sn-glycero-3-phospho-(1D-myo-inositol) + (5Z,8Z,11Z,14Z)-eicosatetraenoyl-CoA = a 1-acyl-2-(5Z,8Z,11Z,14Z-eicosatetraenoyl)-sn-glycero-3-phospho-(1D-myo-inositol) + CoA. Its pathway is phospholipid metabolism; CDP-diacylglycerol biosynthesis; CDP-diacylglycerol from sn-glycerol 3-phosphate: step 2/3. Functionally, converts 1-acyl-sn-glycerol-3-phosphate (lysophosphatidic acid or LPA) into 1,2-diacyl-sn-glycerol-3-phosphate (phosphatidic acid or PA) by incorporating an acyl moiety at the sn-2 position of the glycerol backbone. Acts on LPA containing saturated or unsaturated fatty acids C16:0-C20:4 at the sn-1 position using C18:1, C20:4 or C18:2-CoA as the acyl donor. Also acts on lysophosphatidylcholine, lysophosphatidylinositol and lysophosphatidylserine using C18:1 or C20:4-CoA. Has a preference for arachidonoyl-CoA as a donor. Also has a modest lysophosphatidylinositol acyltransferase (LPIAT) activity, converts lysophosphatidylinositol (LPI) into phosphatidylinositol. The sequence is that of 1-acyl-sn-glycerol-3-phosphate acyltransferase gamma (AGPAT3) from Homo sapiens (Human).